A 441-amino-acid chain; its full sequence is Nucleoprotein (441 aa).

Phosphoserine; by host is present on Ser-5. The CoV N NTD domain maps to 14-136 (VPLSLYAPLR…QLPSVVEIVE (123 aa)). Residues 16-146 (LSLYAPLRVT…PNTPPASRAN (131 aa)) are RNA-binding. Disordered regions lie at residues 131–219 (VVEI…VTSR) and 231–278 (KSLG…LKDI). Phosphoserine; by host is present on Ser-143. Over residues 143–215 (SRANSRSRSR…NRNQSNDRGG (73 aa)) the composition is skewed to low complexity. Composition is skewed to basic and acidic residues over residues 238–255 (NPDR…KSDN) and 269–278 (TSKERDLKDI). In terms of domain architecture, CoV N CTD spans 266 to 382 (SRATSKERDL…AFKTGNAKLQ (117 aa)). The dimerization stretch occupies residues 277–379 (DIPEWRRIPK…QVDAFKTGNA (103 aa)).

Belongs to the alphacoronavirus nucleocapsid protein family. Homooligomer. Both monomeric and oligomeric forms interact with RNA. Interacts with protein M. Interacts with NSP3; this interaction serves to tether the genome to the newly translated replicase-transcriptase complex at a very early stage of infection. Interacts with host RSAD2; this interaction inhibits viral replication. In terms of processing, ADP-ribosylated. The ADP-ribosylation is retained in the virion during infection. Post-translationally, phosphorylated on serine and threonine residues.

It localises to the virion. It is found in the host endoplasmic reticulum-Golgi intermediate compartment. The protein localises to the host Golgi apparatus. Its function is as follows. Packages the positive strand viral genome RNA into a helical ribonucleocapsid (RNP) and plays a fundamental role during virion assembly through its interactions with the viral genome and membrane protein M. Plays an important role in enhancing the efficiency of subgenomic viral RNA transcription as well as viral replication. In Porcine epidemic diarrhea virus (strain CV777) (PEDV), this protein is Nucleoprotein.